The following is a 249-amino-acid chain: NAD(P)H-quinone oxidoreductase subunit T, chloroplastic (249 aa).

The transit peptide at 1–45 (MAYATSTYARTSCIILPKIQNGAHFTDDTKAFRRITARRVTRIYA) directs the protein to the chloroplast. A disordered region spans residues 44 to 84 (YASQGPTKPSKPSPGVDTRIHWESPDEGWIGGRSDPAKSVD). The region spanning 106–172 (SHYQFLGVST…ETRRFYDWTL (67 aa)) is the J domain. A helical transmembrane segment spans residues 224-244 (LTFDILIVLFAVCCIAFVIVF).

As to quaternary structure, part of the chloroplast NDH complex, composed of a mixture of chloroplast and nucleus encoded subunits. Component of the electron donor-binding subcomplex, at least composed of NDHS, NDHT and NDHU.

The protein localises to the plastid. The protein resides in the chloroplast thylakoid membrane. The enzyme catalyses a plastoquinone + NADH + (n+1) H(+)(in) = a plastoquinol + NAD(+) + n H(+)(out). The catalysed reaction is a plastoquinone + NADPH + (n+1) H(+)(in) = a plastoquinol + NADP(+) + n H(+)(out). In terms of biological role, NDH shuttles electrons from NAD(P)H:plastoquinone, via FMN and iron-sulfur (Fe-S) centers, to quinones in the photosynthetic chain and possibly in a chloroplast respiratory chain. The immediate electron acceptor for the enzyme in this species is believed to be plastoquinone. Couples the redox reaction to proton translocation, and thus conserves the redox energy in a proton gradient. Required for the accumulation of both the NDH subcomplex A and NDHS. This Arabidopsis thaliana (Mouse-ear cress) protein is NAD(P)H-quinone oxidoreductase subunit T, chloroplastic.